Reading from the N-terminus, the 492-residue chain is Catalase isozyme 1 (492 aa).

Active-site residues include H65 and N138. Y348 lines the heme pocket.

Belongs to the catalase family. As to quaternary structure, homotetramer. It depends on heme as a cofactor.

The protein localises to the peroxisome. It is found in the glyoxysome. It carries out the reaction 2 H2O2 = O2 + 2 H2O. Occurs in almost all aerobically respiring organisms and serves to protect cells from the toxic effects of hydrogen peroxide. The polypeptide is Catalase isozyme 1 (CAT1) (Solanum tuberosum (Potato)).